The primary structure comprises 631 residues: tRNA uridine 5-carboxymethylaminomethyl modification enzyme MnmG (631 aa).

FAD contacts are provided by residues 13–18 (GGGHAG), V125, and S180. NAD(+) is bound at residue 273 to 287 (GPRYCPSIEDKVMRF). Q370 contacts FAD.

The protein belongs to the MnmG family. As to quaternary structure, homodimer. Heterotetramer of two MnmE and two MnmG subunits. FAD is required as a cofactor.

The protein resides in the cytoplasm. In terms of biological role, NAD-binding protein involved in the addition of a carboxymethylaminomethyl (cmnm) group at the wobble position (U34) of certain tRNAs, forming tRNA-cmnm(5)s(2)U34. In Vibrio atlanticus (strain LGP32) (Vibrio splendidus (strain Mel32)), this protein is tRNA uridine 5-carboxymethylaminomethyl modification enzyme MnmG.